A 294-amino-acid polypeptide reads, in one-letter code: Nucleoside-specific channel-forming protein Tsx (294 aa).

The N-terminal stretch at 1–22 (MKKTLLAASAVVALSASFTAGA) is a signal peptide.

Belongs to the nucleoside-specific channel-forming outer membrane porin (Tsx) (TC 1.B.10) family.

Its subcellular location is the cell outer membrane. Its function is as follows. Functions as a substrate-specific channel for nucleosides and deoxynucleosides. Also functions in albicidin uptake and as receptor for colicin K. Also is a receptor for several Tsx-specific bacteriophages. This chain is Nucleoside-specific channel-forming protein Tsx, found in Klebsiella aerogenes (strain ATCC 13048 / DSM 30053 / CCUG 1429 / JCM 1235 / KCTC 2190 / NBRC 13534 / NCIMB 10102 / NCTC 10006 / CDC 819-56) (Enterobacter aerogenes).